The sequence spans 359 residues: Alkanal monooxygenase alpha chain (359 aa).

This sequence belongs to the bacterial luciferase oxidoreductase family. Heterodimer of an alpha and a beta chain.

The enzyme catalyses a long-chain fatty aldehyde + FMNH2 + O2 = a long-chain fatty acid + hnu + FMN + H2O + 2 H(+). In terms of biological role, light-emitting reaction in luminous bacteria. This Photorhabdus laumondii subsp. laumondii (strain DSM 15139 / CIP 105565 / TT01) (Photorhabdus luminescens subsp. laumondii) protein is Alkanal monooxygenase alpha chain (luxA).